The primary structure comprises 314 residues: Epithelial-stromal interaction protein 1 (314 aa).

Disordered regions lie at residues 1–72 (MYPR…PNET), 200–219 (NRSA…WKLP), 225–267 (PSRA…HQEE), and 292–314 (SQPG…GWGI). Positions 43–58 (AEPKGPKLERQGHGDQ) are enriched in basic and acidic residues. Positions 71–180 (ETRRQKIQRI…QEDIRRATLR (110 aa)) form a coiled coil. Residues 232–267 (AHKDSPQKEDNQKLQKTRDGHQKNKLLETKGQHQEE) show a composition bias toward basic and acidic residues. Residues 305 to 314 (NMNSTDGWGI) are compositionally biased toward polar residues.

Its function is as follows. Plays a role in M1 macrophage polarization and is required for the proper regulation of gene expression during M1 versus M2 macrophage differentiation. Might play a role in RELA/p65 and STAT1 phosphorylation and nuclear localization upon activation of macrophages. This is Epithelial-stromal interaction protein 1 (Epsti1) from Rattus norvegicus (Rat).